The primary structure comprises 293 residues: Ribosomal protein L11 methyltransferase (293 aa).

The S-adenosyl-L-methionine site is built by Thr145, Gly166, Asp188, and Asn230.

Belongs to the methyltransferase superfamily. PrmA family.

The protein resides in the cytoplasm. The catalysed reaction is L-lysyl-[protein] + 3 S-adenosyl-L-methionine = N(6),N(6),N(6)-trimethyl-L-lysyl-[protein] + 3 S-adenosyl-L-homocysteine + 3 H(+). Its function is as follows. Methylates ribosomal protein L11. This Mannheimia succiniciproducens (strain KCTC 0769BP / MBEL55E) protein is Ribosomal protein L11 methyltransferase.